A 1136-amino-acid polypeptide reads, in one-letter code: Phytochrome (1136 aa).

The segment at Met1–Val28 is disordered. The span at His11–Arg20 shows a compositional bias: low complexity. The region spanning Asp231 to Val414 is the GAF domain. Residue Cys336 participates in phytochromobilin binding. PAS domains follow at residues Val629–Glu699 and Asp762–Arg833. The Histidine kinase domain maps to Tyr913–Gln1132.

It belongs to the phytochrome family. Homodimer. Post-translationally, contains one covalently linked phytochromobilin chromophore.

Regulatory photoreceptor which exists in two forms that are reversibly interconvertible by light: the Pr form that absorbs maximally in the red region of the spectrum and the Pfr form that absorbs maximally in the far-red region. Photoconversion of Pr to Pfr induces an array of morphogenic responses, whereas reconversion of Pfr to Pr cancels the induction of those responses. Pfr controls the expression of a number of nuclear genes including those encoding the small subunit of ribulose-bisphosphate carboxylase, chlorophyll A/B binding protein, protochlorophyllide reductase, rRNA, etc. It also controls the expression of its own gene(s) in a negative feedback fashion. This chain is Phytochrome, found in Picea abies (Norway spruce).